The chain runs to 349 residues: Ferredoxin--NADP reductase 1 (349 aa).

FAD contacts are provided by Glu36, Lys44, Tyr48, Val88, Leu123, Asp290, and Ser331.

It belongs to the ferredoxin--NADP reductase type 2 family. Homodimer. It depends on FAD as a cofactor.

The enzyme catalyses 2 reduced [2Fe-2S]-[ferredoxin] + NADP(+) + H(+) = 2 oxidized [2Fe-2S]-[ferredoxin] + NADPH. The sequence is that of Ferredoxin--NADP reductase 1 from Bacillus cereus (strain ATCC 10987 / NRS 248).